The chain runs to 434 residues: Tol-Pal system protein TolB (434 aa).

An N-terminal signal peptide occupies residues 1 to 28 (MMNTRVWCKIIGMLALLVWLVSSPSVFA).

This sequence belongs to the TolB family. In terms of assembly, the Tol-Pal system is composed of five core proteins: the inner membrane proteins TolA, TolQ and TolR, the periplasmic protein TolB and the outer membrane protein Pal. They form a network linking the inner and outer membranes and the peptidoglycan layer.

The protein localises to the periplasm. Part of the Tol-Pal system, which plays a role in outer membrane invagination during cell division and is important for maintaining outer membrane integrity. The polypeptide is Tol-Pal system protein TolB (Nitrosococcus oceani (strain ATCC 19707 / BCRC 17464 / JCM 30415 / NCIMB 11848 / C-107)).